The chain runs to 217 residues: Biotin transport regulator (217 aa).

Residues 14-49 form a disordered region; sequence GDGLGNLAGRSADPTGAADKGESGVPVPPTGFVDPT.

In terms of biological role, may be part of a system that R.meliloti uses to respond to plant (alfalfa) biotin signals. The chain is Biotin transport regulator (bioS) from Rhizobium meliloti (strain 1021) (Ensifer meliloti).